The sequence spans 51 residues: Small polypeptide DEVIL 1 (51 aa).

A disordered region spans residues 1–25 (MEMKRVMMSSAERSKEKKRSISRRL). The segment covering 16–25 (EKKRSISRRL) has biased composition (basic residues). Positions 20-51 (SISRRLGKYMKEQKGRIYIIRRCMVMLLCSHD) are required for DVL/RTFL small polypeptide activity. The helical transmembrane segment at 28–44 (YMKEQKGRIYIIRRCMV) threads the bilayer.

It belongs to the DVL/RTFL small polypeptides family. In terms of tissue distribution, mostly expressed in leaves and, to a lower extent, in roots and stems.

The protein resides in the cell membrane. Functionally, small polypeptide acting as a regulatory molecule which coordinates cellular responses required for differentiation, growth and development, including leaves shape, pedicule elongation, inflorescence organization and fruit maturation, probably by restricting polar cell proliferation in lateral organs and coordinating socket cell recruitment and differentiation at trichome sites. The sequence is that of Small polypeptide DEVIL 1 from Arabidopsis thaliana (Mouse-ear cress).